The following is a 597-amino-acid chain: Kelch-like protein 21 (597 aa).

Residues L35–G103 form the BTB domain. The region spanning C138–E239 is the BACK domain. Kelch repeat units lie at residues I287–N335, D336–G382, L384–G422, R423–G470, M472–G512, and K513–R560. The interval G570 to Q597 is disordered.

Component of the BCR(KLHL21) E3 ubiquitin ligase complex, at least composed of CUL3, KLHL21 and RBX1.

It is found in the cytoplasm. It localises to the cytoskeleton. Its subcellular location is the spindle. The protein operates within protein modification; protein ubiquitination. Its function is as follows. Substrate-specific adapter of BCR (BTB-CUL3-RBX1) E3 ubiquitin-protein ligase complex required for efficient chromosome alignment and cytokinesis. The BCR(KLHL21) E3 ubiquitin ligase complex regulates localization of the chromosomal passenger complex (CPC) from chromosomes to the spindle midzone in anaphase and mediates the ubiquitination of AURKB. Ubiquitination of AURKB by BCR(KLHL21) E3 ubiquitin ligase complex may not lead to its degradation by the proteasome. The protein is Kelch-like protein 21 (Klhl21) of Rattus norvegicus (Rat).